The sequence spans 224 residues: Claudin-17 (224 aa).

Residues Met-1–Gln-7 lie on the Cytoplasmic side of the membrane. A helical transmembrane segment spans residues Ile-8 to Pro-28. The Extracellular segment spans residues Gln-29–Arg-81. Residues Ala-82–Met-102 form a helical membrane-spanning segment. At Lys-103–Val-124 the chain is on the cytoplasmic side. Residues Leu-125–Ile-145 form a helical membrane-spanning segment. Residues Arg-146–Ala-164 lie on the Extracellular side of the membrane. Residues Leu-165–Phe-185 form a helical membrane-spanning segment. At Cys-186–Val-224 the chain is on the cytoplasmic side.

Belongs to the claudin family. In terms of assembly, cannot form tight junction strands on its own. Interacts with OCLN. In terms of tissue distribution, in the kidney, expressed in the proximal tubule and in the Henle's loop. In the distal convoluted tubule, not expressed in all tubules. Not detected in the collecting duct (at protein level).

It localises to the cell junction. The protein localises to the tight junction. It is found in the basolateral cell membrane. It catalyses the reaction chloride(in) = chloride(out). The enzyme catalyses hydrogencarbonate(in) = hydrogencarbonate(out). The catalysed reaction is bromide(in) = bromide(out). It carries out the reaction iodide(out) = iodide(in). It catalyses the reaction fluoride(in) = fluoride(out). The enzyme catalyses nitrate(in) = nitrate(out). The catalysed reaction is thiocyanate(in) = thiocyanate(out). In terms of biological role, channel-forming tight junction protein with selectivity for anions, including chloride and hydrogencarbonate, and for solutes smaller than 9 Angstrom in diameter. In the kidney proximal tubule, may be involved in paracellular reabsorption of filtered anions. Does not affect water permeability. This chain is Claudin-17 (CLDN17), found in Homo sapiens (Human).